The primary structure comprises 634 residues: DNA-directed RNA polymerase subunit gamma (634 aa).

Zn(2+)-binding residues include C74, C76, C89, and C92. Mg(2+)-binding residues include D471, D473, and D475.

Belongs to the RNA polymerase beta' chain family. RpoC1 subfamily. As to quaternary structure, in cyanobacteria the RNAP catalytic core is composed of 2 alpha, 1 beta, 1 beta', 1 gamma and 1 omega subunit. When a sigma factor is associated with the core the holoenzyme is formed, which can initiate transcription. It depends on Mg(2+) as a cofactor. The cofactor is Zn(2+).

It catalyses the reaction RNA(n) + a ribonucleoside 5'-triphosphate = RNA(n+1) + diphosphate. Functionally, DNA-dependent RNA polymerase catalyzes the transcription of DNA into RNA using the four ribonucleoside triphosphates as substrates. This chain is DNA-directed RNA polymerase subunit gamma, found in Synechococcus sp. (strain WH7803).